Reading from the N-terminus, the 347-residue chain is DNA-directed RNA polymerase subunit alpha (347 aa).

Residues 1–226 (MLISQRPTLS…ELFGLARELN (226 aa)) form an alpha N-terminal domain (alpha-NTD) region. The segment at 243-347 (HIASFALPID…SQDYAETEQL (105 aa)) is alpha C-terminal domain (alpha-CTD). Residues 326–347 (TTGTWSTDGAYDSQDYAETEQL) are disordered.

It belongs to the RNA polymerase alpha chain family. Homodimer. The RNAP catalytic core consists of 2 alpha, 1 beta, 1 beta' and 1 omega subunit. When a sigma factor is associated with the core the holoenzyme is formed, which can initiate transcription.

It catalyses the reaction RNA(n) + a ribonucleoside 5'-triphosphate = RNA(n+1) + diphosphate. In terms of biological role, DNA-dependent RNA polymerase catalyzes the transcription of DNA into RNA using the four ribonucleoside triphosphates as substrates. This is DNA-directed RNA polymerase subunit alpha from Mycobacterium leprae (strain TN).